Here is a 402-residue protein sequence, read N- to C-terminus: NADH-quinone oxidoreductase subunit D (402 aa).

This sequence belongs to the complex I 49 kDa subunit family. NDH-1 is composed of 14 different subunits. Subunits NuoB, C, D, E, F, and G constitute the peripheral sector of the complex.

Its subcellular location is the cell inner membrane. The enzyme catalyses a quinone + NADH + 5 H(+)(in) = a quinol + NAD(+) + 4 H(+)(out). Its function is as follows. NDH-1 shuttles electrons from NADH, via FMN and iron-sulfur (Fe-S) centers, to quinones in the respiratory chain. The immediate electron acceptor for the enzyme in this species is believed to be ubiquinone. Couples the redox reaction to proton translocation (for every two electrons transferred, four hydrogen ions are translocated across the cytoplasmic membrane), and thus conserves the redox energy in a proton gradient. This chain is NADH-quinone oxidoreductase subunit D, found in Xanthobacter autotrophicus (strain ATCC BAA-1158 / Py2).